The chain runs to 515 residues: MSVSQLKIQTLTLNDSEPSLPGKPITPSKEQIRDDVVLLWKEEPAAEDLDLPHLYDKMKIRNTDWQFDINTLEDVLVSNNLYSVDDSQMDSYNDKIEFPDISEVMHLVNDKLPSKVEIRECEELRKGRGLYATRDIQQGELLFHEKVPIAMVPPMDKLKLIRSGKSCSMCGVSLSNSSHFTMLHGLDCNGCNSIWCSTNCKQKDITHPYLKHFGSKNKNIRPMDWNMFERHCQENIFVAAYSIGVIHAASLIDKAQSDEINQQFEALAKISQRVRYESSDSNNIGGTFDAEIGSLKEENPEPLWKKAFDLFIRTFPDTAEMGYEVFLEYLGRFHINQLSGQLYFLYSFLNHNCEPNVRYDINNKLELKVYARKFIKKDEELVTTYVNPLHGVSLRRRELRVNWGFICNCDRCAKEIELRKKNAVSIRETVLNSNSSSEVSLRSGLNVTSPIALQRSNGGSSSDLRRKSSIRNRKPDLKEMLKNSKEFELEAPAALGRNRSTSVRFDDIVSMAVEE.

Residues 114-386 (SKVEIRECEE…KDEELVTTYV (273 aa)) enclose the SET domain. Polar residues predominate over residues 452–462 (ALQRSNGGSSS). The tract at residues 452-476 (ALQRSNGGSSSDLRRKSSIRNRKPD) is disordered.

This sequence belongs to the class V-like SAM-binding methyltransferase superfamily. Histone-lysine methyltransferase family. SET5 subfamily.

It localises to the nucleus. It is found in the chromosome. The protein localises to the cytoplasm. It carries out the reaction L-lysyl-[histone] + S-adenosyl-L-methionine = N(6)-methyl-L-lysyl-[histone] + S-adenosyl-L-homocysteine + H(+). Functionally, histone methyltransferase that monomethylates 'Lys-5', 'Lys-8' and 'Lys-12' of histone H4 (H4K5me1, H4K8me1 and H4K12me1, respectively), thereby controlling gene expression and remodeling chromatin structures. The chain is Histone-lysine N-methyltransferase SET5 (SET5) from Candida glabrata (strain ATCC 2001 / BCRC 20586 / JCM 3761 / NBRC 0622 / NRRL Y-65 / CBS 138) (Yeast).